The sequence spans 505 residues: Deoxyguanosinetriphosphate triphosphohydrolase (505 aa).

The HD domain maps to Arg-66–Cys-273.

The protein belongs to the dGTPase family. Type 1 subfamily. As to quaternary structure, homotetramer. Requires Mg(2+) as cofactor.

It carries out the reaction dGTP + H2O = 2'-deoxyguanosine + triphosphate + H(+). In terms of biological role, dGTPase preferentially hydrolyzes dGTP over the other canonical NTPs. This is Deoxyguanosinetriphosphate triphosphohydrolase from Escherichia coli O127:H6 (strain E2348/69 / EPEC).